We begin with the raw amino-acid sequence, 466 residues long: Methylenomycin A resistance protein (466 aa).

14 consecutive transmembrane segments (helical) span residues 16–36 (ISVLIVLALGFLMATLDVTVV), 56–76 (WVVDGYILTFASLLLAGGALA), 83–103 (TIYILGLAVFVMASCLCAASI), 113–133 (LIQGIGAALFMPSSLSLLAAS), 146–166 (LWAALVSAASALGPFIGGVLV), 168–188 (LAGWQSIFLINVPIGAAALIS), 203–223 (VNIIGHLLGMMALGFLSYALI), 234–254 (VILVAFTAAVLAFVLFLLREI), 276–296 (FIGFLLNFALFGGMFMLSLFL), 305–325 (FMAGVELLPMMAVFVIGNLLF), 337–357 (LMFVSMAVSCIIALLLFVLIS), 367–387 (VLMSVMNLCTGITVPAMTTVI), 409–429 (IGALVGVAITGVIIHLSATWY), and 434–454 (FAFLMMGAAYSLAALLVWLFL).

The protein belongs to the major facilitator superfamily. EmrB family.

It localises to the cell membrane. Functionally, resistance to the epoxide antibiotic methylenomycin. The polypeptide is Methylenomycin A resistance protein (mmr) (Bacillus subtilis (strain 168)).